The following is a 108-amino-acid chain: Large ribosomal subunit protein uL24 (108 aa).

The protein belongs to the universal ribosomal protein uL24 family. In terms of assembly, part of the 50S ribosomal subunit.

One of two assembly initiator proteins, it binds directly to the 5'-end of the 23S rRNA, where it nucleates assembly of the 50S subunit. Functionally, one of the proteins that surrounds the polypeptide exit tunnel on the outside of the subunit. This chain is Large ribosomal subunit protein uL24, found in Frankia casuarinae (strain DSM 45818 / CECT 9043 / HFP020203 / CcI3).